Reading from the N-terminus, the 190-residue chain is Transcription termination/antitermination protein NusG (190 aa).

Residues 138 to 166 enclose the KOW domain; sequence VGEIVTVTEGPFETFTGTVEEVDQEKARL.

This sequence belongs to the NusG family.

Functionally, participates in transcription elongation, termination and antitermination. This Rickettsia bellii (strain RML369-C) protein is Transcription termination/antitermination protein NusG.